The chain runs to 202 residues: T-cell surface glycoprotein CD3 epsilon chain (202 aa).

An N-terminal signal peptide occupies residues 1–21 (MPSGSLWRVLGLCLLSVGAWG). Residues 22 to 125 (QEDNEDPLEP…NCVEVDTMTA (104 aa)) lie on the Extracellular side of the membrane. An Ig-like domain is found at 33–107 (PQTSASARYK…TSNSLEKNYL (75 aa)). Cys54 and Cys96 are oxidised to a cystine. Residues 126-146 (VAIVVADVCITLGFLLLVYYW) form a helical membrane-spanning segment. Over 147–202 (SKNKKASSVTMMRGPGAGGRPRGQNKEKPPPVPNPDYEPIRKGQQDLYSGLNQRGI) the chain is Cytoplasmic. The interval 156-202 (TMMRGPGAGGRPRGQNKEKPPPVPNPDYEPIRKGQQDLYSGLNQRGI) is disordered. An NUMB-binding region region spans residues 170-187 (QNKEKPPPVPNPDYEPIR). The ITAM domain occupies 173-200 (EKPPPVPNPDYEPIRKGQQDLYSGLNQR). The proline-rich sequence stretch occupies residues 174 to 181 (KPPPVPNP). Phosphotyrosine occurs at positions 183 and 194. A compositionally biased stretch (polar residues) spans 192–202 (DLYSGLNQRGI).

The TCR-CD3 complex is composed of a CD3D/CD3E and a CD3G/CD3E heterodimers that preferentially associate with TCRalpha and TCRbeta, respectively, to form TCRalpha/CD3E/CD3G and TCRbeta/CD3G/CD3E trimers. In turn, the hexamer interacts with CD3Z homodimer to form the TCR-CD3 complex. Alternatively, TCRalpha and TCRbeta can be replaced by TCRgamma and TCRdelta. Interacts with CD6. Interacts (via Proline-rich sequence) with NCK1; the interaction is ligand dependent but independent of tyrosine kinase activation. Post-translationally, phosphorylated on Tyr residues after T-cell receptor triggering by LCK in association with CD4/CD8.

It is found in the cell membrane. In terms of biological role, part of the TCR-CD3 complex present on T-lymphocyte cell surface that plays an essential role in adaptive immune response. When antigen presenting cells (APCs) activate T-cell receptor (TCR), TCR-mediated signals are transmitted across the cell membrane by the CD3 chains CD3D, CD3E, CD3G and CD3Z. All CD3 chains contain immunoreceptor tyrosine-based activation motifs (ITAMs) in their cytoplasmic domain. Upon TCR engagement, these motifs become phosphorylated by Src family protein tyrosine kinases LCK and FYN, resulting in the activation of downstream signaling pathways. In addition of this role of signal transduction in T-cell activation, CD3E plays an essential role in correct T-cell development. Also participates in internalization and cell surface down-regulation of TCR-CD3 complexes via endocytosis sequences present in CD3E cytosolic region. In addition to its role as a TCR coreceptor, it serves as a receptor for ITPRIPL1. Ligand recognition inhibits T-cell activation by promoting interaction with NCK1, which prevents CD3E-ZAP70 interaction and blocks the ERK-NFkB signaling cascade and calcium influx. This chain is T-cell surface glycoprotein CD3 epsilon chain (CD3E), found in Felis catus (Cat).